The primary structure comprises 238 residues: Large ribosomal subunit protein uL2 (238 aa).

The interval F201–K238 is disordered.

This sequence belongs to the universal ribosomal protein uL2 family. As to quaternary structure, part of the 50S ribosomal subunit. Forms a bridge to the 30S subunit in the 70S ribosome.

One of the primary rRNA binding proteins. Required for association of the 30S and 50S subunits to form the 70S ribosome, for tRNA binding and peptide bond formation. It has been suggested to have peptidyltransferase activity; this is somewhat controversial. Makes several contacts with the 16S rRNA in the 70S ribosome. The polypeptide is Large ribosomal subunit protein uL2 (Methanoregula boonei (strain DSM 21154 / JCM 14090 / 6A8)).